We begin with the raw amino-acid sequence, 166 residues long: Signal peptidase complex catalytic subunit SEC11 (166 aa).

At 1–9 the chain is on the cytoplasmic side; sequence MNLRQQLTQ. The chain crosses the membrane as a helical; Signal-anchor for type II membrane protein span at residues 10-31; it reads LLSIAYVFTSAFVAWKALSIVA. Residues 32–166 are Lumenal-facing; that stretch reads NSHSPIVVVL…MGLSALLSGE (135 aa). Catalysis depends on charge relay system residues Ser44, His83, and Asp108. Residues 152–163 form a C-terminal short (CTS) helix region; the sequence is ALLGFMGLSALL.

The protein belongs to the peptidase S26B family. In terms of assembly, component of the signal peptidase complex (SPC) composed of a catalytic subunit SEC11 and three accessory subunits SPC1, SPC2 and SPC3. The complex induces a local thinning of the ER membrane which is used to measure the length of the signal peptide (SP) h-region of protein substrates. This ensures the selectivity of the complex towards h-regions shorter than 18-20 amino acids. SPC associates with the translocon complex.

It is found in the endoplasmic reticulum membrane. The catalysed reaction is Cleavage of hydrophobic, N-terminal signal or leader sequences from secreted and periplasmic proteins.. In terms of biological role, catalytic component of the signal peptidase complex (SPC) which catalyzes the cleavage of N-terminal signal sequences from nascent proteins as they are translocated into the lumen of the endoplasmic reticulum. Specifically cleaves N-terminal signal peptides that contain a hydrophobic alpha-helix (h-region) shorter than 18-20 amino acids. This chain is Signal peptidase complex catalytic subunit SEC11 (SEC11), found in Clavispora lusitaniae (strain ATCC 42720) (Yeast).